The sequence spans 92 residues: Large ribosomal subunit protein bL36m (92 aa).

A mitochondrion-targeting transit peptide spans 1–54 (MASLGRKFFAVGVLSRVFPSAFNAQKGLLKNASMFLTPAFRLSPSLLPWNFSRG).

It belongs to the bacterial ribosomal protein bL36 family. In terms of assembly, component of the mitochondrial large ribosomal subunit (mt-LSU). Mature yeast 74S mitochondrial ribosomes consist of a small (37S) and a large (54S) subunit. The 37S small subunit contains a 15S ribosomal RNA (15S mt-rRNA) and at least 32 different proteins. The 54S large subunit contains a 21S rRNA (21S mt-rRNA) and at least 45 different proteins. bL36m has a zinc binding site.

The protein resides in the mitochondrion. Functionally, component of the mitochondrial ribosome (mitoribosome), a dedicated translation machinery responsible for the synthesis of mitochondrial genome-encoded proteins, including at least some of the essential transmembrane subunits of the mitochondrial respiratory chain. The mitoribosomes are attached to the mitochondrial inner membrane and translation products are cotranslationally integrated into the membrane. bL36m may be involved in a process influencing telomere capping. This chain is Large ribosomal subunit protein bL36m (rtc6), found in Schizosaccharomyces pombe (strain 972 / ATCC 24843) (Fission yeast).